A 534-amino-acid polypeptide reads, in one-letter code: Corneodesmosin (534 aa).

A signal peptide spans 1–32 (MGLSRAPWMGRVGGRGMMALLLAGLLLPGTLA). 2 disordered regions span residues 38-252 (FSDP…HSVS) and 396-497 (CSPF…GSAG). Low complexity-rich tracts occupy residues 64-82 (GFSS…SSAS), 107-185 (GYSQ…SGSA), 200-236 (SQLG…SGGP), 397-415 (SPFS…SSGS), and 431-446 (PGTG…QSSG). Over residues 454 to 472 (GSKSSSSGHPCMSVSSLTL) the composition is skewed to polar residues.

Its subcellular location is the secreted. Its function is as follows. Important for the epidermal barrier integrity. In Macaca mulatta (Rhesus macaque), this protein is Corneodesmosin (CDSN).